Here is a 205-residue protein sequence, read N- to C-terminus: Octanoyltransferase (205 aa).

In terms of domain architecture, BPL/LPL catalytic spans 30–205; sequence NSSDELVWLL…ILKKEFYKIF (176 aa). Residues 68-75, 140-142, and 153-155 contribute to the substrate site; these read RGGKYTYH, AFG, and GIA. The active-site Acyl-thioester intermediate is the cysteine 171.

This sequence belongs to the LipB family.

The protein localises to the cytoplasm. The catalysed reaction is octanoyl-[ACP] + L-lysyl-[protein] = N(6)-octanoyl-L-lysyl-[protein] + holo-[ACP] + H(+). It participates in protein modification; protein lipoylation via endogenous pathway; protein N(6)-(lipoyl)lysine from octanoyl-[acyl-carrier-protein]: step 1/2. In terms of biological role, catalyzes the transfer of endogenously produced octanoic acid from octanoyl-acyl-carrier-protein onto the lipoyl domains of lipoate-dependent enzymes. Lipoyl-ACP can also act as a substrate although octanoyl-ACP is likely to be the physiological substrate. This Wolbachia sp. subsp. Brugia malayi (strain TRS) protein is Octanoyltransferase.